We begin with the raw amino-acid sequence, 352 residues long: Photosystem II D2 protein (352 aa).

Residues 40–60 (CAYLALGGWLTGTTFVTSWYT) form a helical membrane-spanning segment. His117 contacts chlorophyll a. The helical transmembrane segment at 124 to 140 (GFMLRQFEIARLVGVRP) threads the bilayer. Pheophytin a is bound by residues Gln129 and Asn142. The chain crosses the membrane as a helical span at residues 152–165 (VFVSVFLIYPLGQS). His197 contacts chlorophyll a. A helical transmembrane segment spans residues 207–227 (GALLCAIHGATVENTLYKDGE). Residues His214 and Phe261 each contribute to the a plastoquinone site. His214 lines the Fe cation pocket. His268 is a Fe cation binding site. Residues 278–294 (GLWMSSIGVVGLALNLR) traverse the membrane as a helical segment.

This sequence belongs to the reaction center PufL/M/PsbA/D family. PSII is composed of 1 copy each of membrane proteins PsbA, PsbB, PsbC, PsbD, PsbE, PsbF, PsbH, PsbI, PsbJ, PsbK, PsbL, PsbM, PsbT, PsbX, PsbY, PsbZ, Psb30/Ycf12, peripheral proteins PsbO, CyanoQ (PsbQ), PsbU, PsbV and a large number of cofactors. It forms dimeric complexes. The D1/D2 heterodimer binds P680, chlorophylls that are the primary electron donor of PSII, and subsequent electron acceptors. It shares a non-heme iron and each subunit binds pheophytin, quinone, additional chlorophylls, carotenoids and lipids. There is also a Cl(-1) ion associated with D1 and D2, which is required for oxygen evolution. The PSII complex binds additional chlorophylls, carotenoids and specific lipids. is required as a cofactor.

It is found in the cellular thylakoid membrane. The catalysed reaction is 2 a plastoquinone + 4 hnu + 2 H2O = 2 a plastoquinol + O2. Its function is as follows. Photosystem II (PSII) is a light-driven water:plastoquinone oxidoreductase that uses light energy to abstract electrons from H(2)O, generating O(2) and a proton gradient subsequently used for ATP formation. It consists of a core antenna complex that captures photons, and an electron transfer chain that converts photonic excitation into a charge separation. The D1/D2 (PsbA/PsbD) reaction center heterodimer binds P680, the primary electron donor of PSII as well as several subsequent electron acceptors. D2 is needed for assembly of a stable PSII complex. In Synechococcus sp. (strain JA-3-3Ab) (Cyanobacteria bacterium Yellowstone A-Prime), this protein is Photosystem II D2 protein.